A 178-amino-acid polypeptide reads, in one-letter code: Gamma-crystallin S (178 aa).

At S2 the chain carries N-acetylserine. The segment at 2-5 is N-terminal arm; that stretch reads SKSV. 2 Beta/gamma crystallin 'Greek key' domains span residues 6–44 and 45–87; these read AKIT…RVTG and GAWV…KVIH. The interval 88–93 is connecting peptide; that stretch reads LSSGGQ. Beta/gamma crystallin 'Greek key' domains follow at residues 94 to 134 and 135 to 177; these read YKLQ…KVLD and GVWV…RRIM.

The protein belongs to the beta/gamma-crystallin family. In terms of assembly, monomer.

Crystallins are the dominant structural components of the vertebrate eye lens. This is Gamma-crystallin S (CRYGS) from Macropus fuliginosus (Western gray kangaroo).